Here is a 244-residue protein sequence, read N- to C-terminus: Type III pantothenate kinase (244 aa).

ATP is bound at residue 11–18 (DAGNTSIK). Substrate is bound by residues Tyr90 and 97 to 100 (GIDR). The active-site Proton acceptor is Asp99. Asp119 serves as a coordination point for K(+). Thr122 contacts ATP. Thr175 serves as a coordination point for substrate.

It belongs to the type III pantothenate kinase family. Homodimer. Requires NH4(+) as cofactor. The cofactor is K(+).

The protein resides in the cytoplasm. It carries out the reaction (R)-pantothenate + ATP = (R)-4'-phosphopantothenate + ADP + H(+). It functions in the pathway cofactor biosynthesis; coenzyme A biosynthesis; CoA from (R)-pantothenate: step 1/5. Catalyzes the phosphorylation of pantothenate (Pan), the first step in CoA biosynthesis. This is Type III pantothenate kinase from Marinomonas sp. (strain MWYL1).